The following is a 505-amino-acid chain: OVARIAN TUMOR DOMAIN-containing deubiquitinating enzyme 6 (505 aa).

The interval 1–191 (MTRILVQRGS…NSSDEHMPCY (191 aa)) is disordered. Positions 9-30 (GSSGSSSNSSRPSSSSSSSSGS) are enriched in low complexity. Over residues 51–72 (DEKQEEVTVVEKAECSDAKDVA) the composition is skewed to basic and acidic residues. The span at 73-86 (VDSDEPADREDDEG) shows a compositional bias: acidic residues. Over residues 115–124 (PPVPAPPPKP) the composition is skewed to pro residues. The span at 159-173 (SSRSSPTGSHPSSPR) shows a compositional bias: low complexity. A compositionally biased stretch (basic and acidic residues) spans 174–188 (SHSENEGYNSSDEHM). An OTU domain is found at 216 to 339 (FEIRRMLEDG…GNHYNSLVDP (124 aa)). D224 is a catalytic residue. C227 acts as the Nucleophile in catalysis. Residue H332 is part of the active site. Residues 416–447 (RIGPKESSTSNAETSSSGARPSGSDSKPAEAV) form a disordered region. The segment covering 421–441 (ESSTSNAETSSSGARPSGSDS) has biased composition (low complexity). One can recognise a UBA domain in the interval 446 to 491 (AVKEKTVLSSSIEMVLSMGFSYAQAMEAYSIFGDDVDSMVCYVLET).

Belongs to the peptidase C85 family. In terms of assembly, interacts with KDM1C. Mostly expressed in stems flowers and siliques, and, to a lower extent, in leaves, roots and seedlings.

The protein localises to the nucleus. It localises to the cytoplasm. It carries out the reaction Thiol-dependent hydrolysis of ester, thioester, amide, peptide and isopeptide bonds formed by the C-terminal Gly of ubiquitin (a 76-residue protein attached to proteins as an intracellular targeting signal).. In terms of biological role, hydrolase that can remove conjugated ubiquitin from proteins in vitro and may therefore play an important regulatory role at the level of protein turnover by preventing degradation. Binds chromatin (e.g. nucleosomes and histones) and has enzymatic histone deubiquitinase activity, specific for the H2B histone. Can both repress (e.g. OSR2) and promote (e.g. AN3) the expression of target genes by associating with chromatin, deubiquitinating H2B and regulating its euchromatic histone marks (e.g. H3ac and H3K4me). In association with LDL1/KDM1C, involved in transcriptional gene repression via histone deubiquitination and demethylation. Promotes the concerted epigenetic regulation and repression (e.g. the removal of euchromatic histone acetylation, ubiquitination, and methylation marks) of a set of genes (e.g. GA20OX, WUS, OSR2, ARL and ABI5) that collectively limit plant growth thus stimulating plant growth and increasing cell size. The polypeptide is OVARIAN TUMOR DOMAIN-containing deubiquitinating enzyme 6 (Arabidopsis thaliana (Mouse-ear cress)).